A 338-amino-acid polypeptide reads, in one-letter code: CRISPR-associated endonuclease Cas1 (338 aa).

Mn(2+)-binding residues include glutamate 165, histidine 230, and glutamate 245.

The protein belongs to the CRISPR-associated endonuclease Cas1 family. Homodimer, forms a heterotetramer with a Cas2 homodimer. It depends on Mg(2+) as a cofactor. Mn(2+) is required as a cofactor.

In terms of biological role, CRISPR (clustered regularly interspaced short palindromic repeat), is an adaptive immune system that provides protection against mobile genetic elements (viruses, transposable elements and conjugative plasmids). CRISPR clusters contain spacers, sequences complementary to antecedent mobile elements, and target invading nucleic acids. CRISPR clusters are transcribed and processed into CRISPR RNA (crRNA). Acts as a dsDNA endonuclease. Involved in the integration of spacer DNA into the CRISPR cassette. This chain is CRISPR-associated endonuclease Cas1, found in Fusobacterium nucleatum subsp. nucleatum (strain ATCC 25586 / DSM 15643 / BCRC 10681 / CIP 101130 / JCM 8532 / KCTC 2640 / LMG 13131 / VPI 4355).